Here is a 252-residue protein sequence, read N- to C-terminus: Enolase-phosphatase E1 (252 aa).

Residues aspartate 14 and glutamate 16 each coordinate Mg(2+). Residues 143–144 (SS) and lysine 177 each bind substrate. Aspartate 202 is a Mg(2+) binding site.

The protein belongs to the HAD-like hydrolase superfamily. MasA/MtnC family. As to quaternary structure, monomer. The cofactor is Mg(2+).

It is found in the cytoplasm. The protein localises to the nucleus. It carries out the reaction 5-methylsulfanyl-2,3-dioxopentyl phosphate + H2O = 1,2-dihydroxy-5-(methylsulfanyl)pent-1-en-3-one + phosphate. Its pathway is amino-acid biosynthesis; L-methionine biosynthesis via salvage pathway; L-methionine from S-methyl-5-thio-alpha-D-ribose 1-phosphate: step 3/6. It participates in amino-acid biosynthesis; L-methionine biosynthesis via salvage pathway; L-methionine from S-methyl-5-thio-alpha-D-ribose 1-phosphate: step 4/6. Functionally, bifunctional enzyme that catalyzes the enolization of 2,3-diketo-5-methylthiopentyl-1-phosphate (DK-MTP-1-P) into the intermediate 2-hydroxy-3-keto-5-methylthiopentenyl-1-phosphate (HK-MTPenyl-1-P), which is then dephosphorylated to form the acireductone 1,2-dihydroxy-3-keto-5-methylthiopentene (DHK-MTPene). The protein is Enolase-phosphatase E1 of Drosophila persimilis (Fruit fly).